A 452-amino-acid chain; its full sequence is Probable E3 ubiquitin-protein ligase ARI15 (452 aa).

Residues 22–256 (SRVYCGICSN…GTSGSCLAPA (235 aa)) form a TRIAD supradomain region. Zn(2+)-binding residues include cysteine 26, cysteine 29, cysteine 54, histidine 56, cysteine 59, cysteine 62, cysteine 83, cysteine 88, cysteine 128, cysteine 133, cysteine 154, cysteine 156, cysteine 161, cysteine 164, histidine 169, cysteine 174, cysteine 208, cysteine 211, cysteine 229, cysteine 231, cysteine 236, cysteine 239, histidine 246, and cysteine 252. The RING-type 1 zinc-finger motif lies at 26–88 (CGICSNIGDD…TAISCPDRDC (63 aa)). The IBR-type zinc-finger motif lies at 106-174 (AMYELYILKS…MLESHRPVTC (69 aa)). The RING-type 2; atypical zinc-finger motif lies at 208–239 (CPHCFIPVEIDGERPWAQFLTCVCSGRFCWKC). The segment at 414–445 (NYGGPYWLCDRCTYGNSWFQRACKMCCDPTAS) adopts a RanBP2-type zinc-finger fold.

This sequence belongs to the RBR family. Ariadne subfamily. Zn(2+) is required as a cofactor. As to expression, ubiquitous.

The catalysed reaction is [E2 ubiquitin-conjugating enzyme]-S-ubiquitinyl-L-cysteine + [acceptor protein]-L-lysine = [E2 ubiquitin-conjugating enzyme]-L-cysteine + [acceptor protein]-N(6)-ubiquitinyl-L-lysine.. It functions in the pathway protein modification; protein ubiquitination. Its function is as follows. Might act as an E3 ubiquitin-protein ligase, or as part of E3 complex, which accepts ubiquitin from specific E2 ubiquitin-conjugating enzymes and then transfers it to substrates. This is Probable E3 ubiquitin-protein ligase ARI15 (ARI15) from Arabidopsis thaliana (Mouse-ear cress).